Here is a 242-residue protein sequence, read N- to C-terminus: Probable transcriptional regulatory protein XAC3151 (242 aa).

This sequence belongs to the TACO1 family.

It localises to the cytoplasm. The polypeptide is Probable transcriptional regulatory protein XAC3151 (Xanthomonas axonopodis pv. citri (strain 306)).